A 522-amino-acid chain; its full sequence is Gypsy retrotransposon integrase-like protein 1 (522 aa).

The 158-residue stretch at 135–292 folds into the Integrase catalytic domain; sequence KVENPWSLVT…TPYFQMFSRN (158 aa). Residue serine 502 is modified to Phosphoserine.

As to expression, widely expressed. Also found in tumors originating from parathyroid gland, colon, stomach, bladder, uterus and prostate.

In Homo sapiens (Human), this protein is Gypsy retrotransposon integrase-like protein 1 (GIN1).